Reading from the N-terminus, the 363-residue chain is Spermatogenesis-associated protein 22 (363 aa).

Composition is skewed to polar residues over residues 1–12 (MKRSLNENSARS) and 145–157 (SCPMSSGAQQQKQ). Disordered stretches follow at residues 1-51 (MKRS…DNYD) and 145-169 (SCPMSSGAQQQKQFGIPEPPNLPRN).

In terms of assembly, component of a multiprotein complex with MEIOB and RPA2. Interacts with MEIOB. Interacts with the complex BRME1:HSF2BP:BRCA2. Expressed in testis.

The protein localises to the chromosome. Functionally, meiosis-specific protein required for homologous recombination in meiosis I. The protein is Spermatogenesis-associated protein 22 (SPATA22) of Macaca fascicularis (Crab-eating macaque).